A 439-amino-acid chain; its full sequence is Diaminopimelate decarboxylase (439 aa).

N6-(pyridoxal phosphate)lysine is present on K66. Pyridoxal 5'-phosphate is bound by residues G248 and 290–293 (EPGR). The substrate site is built by R293, R330, and Y334. Catalysis depends on C361, which acts as the Proton donor. Substrate is bound by residues E362 and Y390. Pyridoxal 5'-phosphate is bound at residue Y390.

Belongs to the Orn/Lys/Arg decarboxylase class-II family. LysA subfamily. Homodimer. Pyridoxal 5'-phosphate serves as cofactor.

The enzyme catalyses meso-2,6-diaminopimelate + H(+) = L-lysine + CO2. It participates in amino-acid biosynthesis; L-lysine biosynthesis via DAP pathway; L-lysine from DL-2,6-diaminopimelate: step 1/1. Functionally, specifically catalyzes the decarboxylation of meso-diaminopimelate (meso-DAP) to L-lysine. This Bacillus subtilis (strain 168) protein is Diaminopimelate decarboxylase.